The chain runs to 211 residues: Probable septum site-determining protein MinC (211 aa).

This sequence belongs to the MinC family. In terms of assembly, interacts with MinD and FtsZ.

Cell division inhibitor that blocks the formation of polar Z ring septums. Rapidly oscillates between the poles of the cell to destabilize FtsZ filaments that have formed before they mature into polar Z rings. Prevents FtsZ polymerization. This chain is Probable septum site-determining protein MinC, found in Clostridium acetobutylicum (strain ATCC 824 / DSM 792 / JCM 1419 / IAM 19013 / LMG 5710 / NBRC 13948 / NRRL B-527 / VKM B-1787 / 2291 / W).